We begin with the raw amino-acid sequence, 227 residues long: Cytochrome c oxidase subunit 2 (227 aa).

Residues 1-14 (MAYPFQLGLQDATS) lie on the Mitochondrial intermembrane side of the membrane. A helical membrane pass occupies residues 15 to 45 (PIMEELLHFHDHTLMIVFLISSLVLYIISLM). The Mitochondrial matrix segment spans residues 46 to 59 (LTTKLTHTSTMDAQ). The chain crosses the membrane as a helical span at residues 60 to 87 (EVETVWTILPAIILILIALLSLRILYMM). The Mitochondrial intermembrane portion of the chain corresponds to 88-227 (DEINNPFLTM…YFETWSALMV (140 aa)). Cu cation-binding residues include H161, C196, E198, C200, H204, and M207. E198 contributes to the Mg(2+) binding site. Y218 is modified (phosphotyrosine).

It belongs to the cytochrome c oxidase subunit 2 family. Component of the cytochrome c oxidase (complex IV, CIV), a multisubunit enzyme composed of 14 subunits. The complex is composed of a catalytic core of 3 subunits MT-CO1, MT-CO2 and MT-CO3, encoded in the mitochondrial DNA, and 11 supernumerary subunits COX4I, COX5A, COX5B, COX6A, COX6B, COX6C, COX7A, COX7B, COX7C, COX8 and NDUFA4, which are encoded in the nuclear genome. The complex exists as a monomer or a dimer and forms supercomplexes (SCs) in the inner mitochondrial membrane with NADH-ubiquinone oxidoreductase (complex I, CI) and ubiquinol-cytochrome c oxidoreductase (cytochrome b-c1 complex, complex III, CIII), resulting in different assemblies (supercomplex SCI(1)III(2)IV(1) and megacomplex MCI(2)III(2)IV(2)). Found in a complex with TMEM177, COA6, COX18, COX20, SCO1 and SCO2. Interacts with TMEM177 in a COX20-dependent manner. Interacts with COX20. Interacts with COX16. The cofactor is Cu cation.

It localises to the mitochondrion inner membrane. The catalysed reaction is 4 Fe(II)-[cytochrome c] + O2 + 8 H(+)(in) = 4 Fe(III)-[cytochrome c] + 2 H2O + 4 H(+)(out). Its function is as follows. Component of the cytochrome c oxidase, the last enzyme in the mitochondrial electron transport chain which drives oxidative phosphorylation. The respiratory chain contains 3 multisubunit complexes succinate dehydrogenase (complex II, CII), ubiquinol-cytochrome c oxidoreductase (cytochrome b-c1 complex, complex III, CIII) and cytochrome c oxidase (complex IV, CIV), that cooperate to transfer electrons derived from NADH and succinate to molecular oxygen, creating an electrochemical gradient over the inner membrane that drives transmembrane transport and the ATP synthase. Cytochrome c oxidase is the component of the respiratory chain that catalyzes the reduction of oxygen to water. Electrons originating from reduced cytochrome c in the intermembrane space (IMS) are transferred via the dinuclear copper A center (CU(A)) of subunit 2 and heme A of subunit 1 to the active site in subunit 1, a binuclear center (BNC) formed by heme A3 and copper B (CU(B)). The BNC reduces molecular oxygen to 2 water molecules using 4 electrons from cytochrome c in the IMS and 4 protons from the mitochondrial matrix. The chain is Cytochrome c oxidase subunit 2 (MT-CO2) from Nyctereutes procyonoides (Raccoon dog).